A 205-amino-acid chain; its full sequence is Small ribosomal subunit protein uS4 (205 aa).

Residues 94-157 (SRLDTVVYRM…QQIPLIQESI (64 aa)) form the S4 RNA-binding domain.

The protein belongs to the universal ribosomal protein uS4 family. Part of the 30S ribosomal subunit. Contacts protein S5. The interaction surface between S4 and S5 is involved in control of translational fidelity.

One of the primary rRNA binding proteins, it binds directly to 16S rRNA where it nucleates assembly of the body of the 30S subunit. In terms of biological role, with S5 and S12 plays an important role in translational accuracy. The chain is Small ribosomal subunit protein uS4 from Rickettsia typhi (strain ATCC VR-144 / Wilmington).